A 209-amino-acid chain; its full sequence is MSKQKHSASSGRWLKEHFDDKYANEARKKGYRSRAYFKIDEIQTKDKLLKPGMTVVDLGAAPGGWSQYAAKIVGDSGQIIACDLLPMDPIAGVSFLQGDFRDDAVLEALLDRIQPLMVDVVMSDMAPNIAGNNSVDQPRAMYLVELALDMCRQVLAPNGSFVVKVFQGEGFDQYVKEVRDMFKVVKIRKPDSSRARSREVFVVATGYKG.

The S-adenosyl-L-methionine site is built by G63, W65, D83, D99, and D124. The active-site Proton acceptor is the K164.

Belongs to the class I-like SAM-binding methyltransferase superfamily. RNA methyltransferase RlmE family.

The protein resides in the cytoplasm. The catalysed reaction is uridine(2552) in 23S rRNA + S-adenosyl-L-methionine = 2'-O-methyluridine(2552) in 23S rRNA + S-adenosyl-L-homocysteine + H(+). Specifically methylates the uridine in position 2552 of 23S rRNA at the 2'-O position of the ribose in the fully assembled 50S ribosomal subunit. The polypeptide is Ribosomal RNA large subunit methyltransferase E (Vibrio parahaemolyticus serotype O3:K6 (strain RIMD 2210633)).